A 598-amino-acid chain; its full sequence is Elongation factor 4 (598 aa).

The 182-residue stretch at 2-183 (KNIRNFCIIA…AIINRVPAPS (182 aa)) folds into the tr-type G domain. Residues 14-19 (DHGKST) and 130-133 (NKVD) contribute to the GTP site.

This sequence belongs to the TRAFAC class translation factor GTPase superfamily. Classic translation factor GTPase family. LepA subfamily.

The protein resides in the cell inner membrane. The catalysed reaction is GTP + H2O = GDP + phosphate + H(+). In terms of biological role, required for accurate and efficient protein synthesis under certain stress conditions. May act as a fidelity factor of the translation reaction, by catalyzing a one-codon backward translocation of tRNAs on improperly translocated ribosomes. Back-translocation proceeds from a post-translocation (POST) complex to a pre-translocation (PRE) complex, thus giving elongation factor G a second chance to translocate the tRNAs correctly. Binds to ribosomes in a GTP-dependent manner. The polypeptide is Elongation factor 4 (Christiangramia forsetii (strain DSM 17595 / CGMCC 1.15422 / KT0803) (Gramella forsetii)).